The sequence spans 189 residues: Mediator of RNA polymerase II transcription subunit 21 (189 aa).

The tract at residues 50-102 (KIPKNSTAPPVPAGAPVPSQSSPPPPQTQRGASEAAADPNLPPAPDSPRTFAS) is disordered. Over residues 58 to 76 (PPVPAGAPVPSQSSPPPPQ) the composition is skewed to pro residues. Positions 127–170 (GIDSSEAEQEKRIRELEAELRGVEEEREAKIRELRTLGRTLERV) form a coiled coil.

Belongs to the Mediator complex subunit 21 family. In terms of assembly, component of the Mediator complex.

The protein localises to the nucleus. Component of the Mediator complex, a coactivator involved in the regulated transcription of nearly all RNA polymerase II-dependent genes. Mediator functions as a bridge to convey information from gene-specific regulatory proteins to the basal RNA polymerase II transcription machinery. Mediator is recruited to promoters by direct interactions with regulatory proteins and serves as a scaffold for the assembly of a functional preinitiation complex with RNA polymerase II and the general transcription factors. The protein is Mediator of RNA polymerase II transcription subunit 21 (srb7) of Aspergillus clavatus (strain ATCC 1007 / CBS 513.65 / DSM 816 / NCTC 3887 / NRRL 1 / QM 1276 / 107).